Reading from the N-terminus, the 183-residue chain is A-type ATP synthase subunit E (183 aa).

It belongs to the V-ATPase E subunit family. Has multiple subunits with at least A(3), B(3), C, D, E, F, H, I and proteolipid K(x).

Its subcellular location is the cell membrane. Its function is as follows. Component of the A-type ATP synthase that produces ATP from ADP in the presence of a proton gradient across the membrane. This chain is A-type ATP synthase subunit E, found in Methanosarcina barkeri (strain Fusaro / DSM 804).